The primary structure comprises 905 residues: Core protein VP3 (905 aa).

Belongs to the orbivirus VP3 family.

The protein resides in the virion. Its function is as follows. The VP3 protein is one of the five proteins (with VP1, VP4, VP6 and VP7) which form the inner capsid of the virus. This is Core protein VP3 (Segment-3) from African horse sickness virus (AHSV).